The following is a 271-amino-acid chain: Formamidopyrimidine-DNA glycosylase (271 aa).

The active-site Schiff-base intermediate with DNA is the Pro-2. The active-site Proton donor is the Glu-3. Lys-58 acts as the Proton donor; for beta-elimination activity in catalysis. 3 residues coordinate DNA: His-91, Arg-110, and Arg-152. Residues 237–271 (LVYGREGQPCVHCGRPIRCETIGQRSSYFCTRCQR) form an FPG-type zinc finger. Arg-261 acts as the Proton donor; for delta-elimination activity in catalysis.

The protein belongs to the FPG family. As to quaternary structure, monomer. It depends on Zn(2+) as a cofactor.

It catalyses the reaction Hydrolysis of DNA containing ring-opened 7-methylguanine residues, releasing 2,6-diamino-4-hydroxy-5-(N-methyl)formamidopyrimidine.. The enzyme catalyses 2'-deoxyribonucleotide-(2'-deoxyribose 5'-phosphate)-2'-deoxyribonucleotide-DNA = a 3'-end 2'-deoxyribonucleotide-(2,3-dehydro-2,3-deoxyribose 5'-phosphate)-DNA + a 5'-end 5'-phospho-2'-deoxyribonucleoside-DNA + H(+). In terms of biological role, involved in base excision repair of DNA damaged by oxidation or by mutagenic agents. Acts as a DNA glycosylase that recognizes and removes damaged bases. Has a preference for oxidized purines, such as 7,8-dihydro-8-oxoguanine (8-oxoG). Has AP (apurinic/apyrimidinic) lyase activity and introduces nicks in the DNA strand. Cleaves the DNA backbone by beta-delta elimination to generate a single-strand break at the site of the removed base with both 3'- and 5'-phosphates. The polypeptide is Formamidopyrimidine-DNA glycosylase (Syntrophotalea carbinolica (strain DSM 2380 / NBRC 103641 / GraBd1) (Pelobacter carbinolicus)).